The primary structure comprises 548 residues: Transcriptional adapter ADA2a (548 aa).

Residues Met-1–Glu-30 form a disordered region. The segment at Pro-48–Phe-104 adopts a ZZ-type zinc-finger fold. Residues Cys-53, Cys-56, Cys-68, Cys-71, Cys-77, Cys-80, His-90, and His-94 each contribute to the Zn(2+) site. Positions Leu-106 to Pro-158 constitute an SANT domain. Lys-257 is subject to N6-acetyllysine; by GCN5. A coiled-coil region spans residues Gln-365–Arg-386. In terms of domain architecture, SWIRM spans Pro-461–Thr-548.

Interacts in vitro with the HAT domain of GCN5 and with the DNA-binding domain of the transcriptional activator DREB1B/CBF1. Acetylated in vitro by GCN5, but acetylation is not essential for biological activity. As to expression, expressed in roots and leaves.

It localises to the nucleus. Its function is as follows. Required for the function of some acidic activation domains, which activate transcription from a distant site. The exact mechanism of action is not yet known. ADA2 stimulates the acetyltransferase activity of GCN5 on free histones or nucleosomes, probably by opening up the promoter region. This chain is Transcriptional adapter ADA2a (ADA2A), found in Arabidopsis thaliana (Mouse-ear cress).